The primary structure comprises 345 residues: Phosphoribosylformylglycinamidine cyclo-ligase (345 aa).

The protein belongs to the AIR synthase family.

The protein resides in the cytoplasm. It catalyses the reaction 2-formamido-N(1)-(5-O-phospho-beta-D-ribosyl)acetamidine + ATP = 5-amino-1-(5-phospho-beta-D-ribosyl)imidazole + ADP + phosphate + H(+). Its pathway is purine metabolism; IMP biosynthesis via de novo pathway; 5-amino-1-(5-phospho-D-ribosyl)imidazole from N(2)-formyl-N(1)-(5-phospho-D-ribosyl)glycinamide: step 2/2. This is Phosphoribosylformylglycinamidine cyclo-ligase from Anaeromyxobacter dehalogenans (strain 2CP-1 / ATCC BAA-258).